The following is a 444-amino-acid chain: C4-dicarboxylate transport protein (444 aa).

A run of 9 helical transmembrane segments spans residues 17–37 (PFYT…ILLG), 57–77 (LVKM…IAGM), 92–112 (LYFL…ANVV), 139–159 (EQSI…GAFA), 161–181 (GDIL…AMVG), 201–221 (LVAI…AFTI), 234–254 (MLIG…LGAV), 320–340 (IYMT…LSWG), and 368–388 (AATL…ILGI).

This sequence belongs to the dicarboxylate/amino acid:cation symporter (DAACS) (TC 2.A.23) family.

It is found in the cell inner membrane. Its function is as follows. Responsible for the transport of dicarboxylates such as succinate, fumarate, and malate from the periplasm across the membrane. This chain is C4-dicarboxylate transport protein, found in Rhizobium johnstonii (strain DSM 114642 / LMG 32736 / 3841) (Rhizobium leguminosarum bv. viciae).